A 263-amino-acid polypeptide reads, in one-letter code: Endolytic peptidoglycan transglycosylase RlpA (263 aa).

The N-terminal stretch at 1–16 (MNRIYLYLLIVLILAG) is a signal peptide. The N-palmitoyl cysteine moiety is linked to residue C17. C17 carries the S-diacylglycerol cysteine lipid modification. The 76-residue stretch at 182-257 (KNNALEYVIQ…AGYDSAFIKT (76 aa)) folds into the SPOR domain.

Belongs to the RlpA family.

The protein resides in the cell membrane. Lytic transglycosylase with a strong preference for naked glycan strands that lack stem peptides. This is Endolytic peptidoglycan transglycosylase RlpA from Vibrio cholerae serotype O1 (strain ATCC 39315 / El Tor Inaba N16961).